A 217-amino-acid polypeptide reads, in one-letter code: N-(5'-phosphoribosyl)anthranilate isomerase (217 aa).

It belongs to the TrpF family.

It carries out the reaction N-(5-phospho-beta-D-ribosyl)anthranilate = 1-(2-carboxyphenylamino)-1-deoxy-D-ribulose 5-phosphate. Its pathway is amino-acid biosynthesis; L-tryptophan biosynthesis; L-tryptophan from chorismate: step 3/5. The chain is N-(5'-phosphoribosyl)anthranilate isomerase from Synechococcus elongatus (strain ATCC 33912 / PCC 7942 / FACHB-805) (Anacystis nidulans R2).